The chain runs to 313 residues: ADP-L-glycero-D-manno-heptose-6-epimerase (313 aa).

NADP(+) contacts are provided by residues 10–11 (MI), 31–32 (DN), Lys38, Arg53, 75–79 (EGACS), and Asn92. Tyr139 acts as the Proton acceptor in catalysis. Lys143 provides a ligand contact to NADP(+). Asn174 is a substrate binding site. Residues Val175 and Lys183 each contribute to the NADP(+) site. Catalysis depends on Lys183, which acts as the Proton acceptor. Residues Ser185, His192, 206 to 209 (FAGS), Arg214, and Tyr277 each bind substrate.

The protein belongs to the NAD(P)-dependent epimerase/dehydratase family. HldD subfamily. Homopentamer. Requires NADP(+) as cofactor.

The catalysed reaction is ADP-D-glycero-beta-D-manno-heptose = ADP-L-glycero-beta-D-manno-heptose. It functions in the pathway nucleotide-sugar biosynthesis; ADP-L-glycero-beta-D-manno-heptose biosynthesis; ADP-L-glycero-beta-D-manno-heptose from D-glycero-beta-D-manno-heptose 7-phosphate: step 4/4. Its pathway is bacterial outer membrane biogenesis; LPS core biosynthesis. In terms of biological role, catalyzes the interconversion between ADP-D-glycero-beta-D-manno-heptose and ADP-L-glycero-beta-D-manno-heptose via an epimerization at carbon 6 of the heptose. This is ADP-L-glycero-D-manno-heptose-6-epimerase from Vibrio vulnificus (strain CMCP6).